A 95-amino-acid chain; its full sequence is MLHTLSSSPYHADLDTLLRSVDEGDALVLLQDGVIAALAGGDIIHRLLASAVFLYVLRPDTEARGMTEQISNNVALIDYNEFVQLTVEHPQQLAW.

This sequence belongs to the DsrH/TusB family. As to quaternary structure, heterohexamer, formed by a dimer of trimers. The hexameric TusBCD complex contains 2 copies each of TusB, TusC and TusD. The TusBCD complex interacts with TusE.

The protein localises to the cytoplasm. Functionally, part of a sulfur-relay system required for 2-thiolation of 5-methylaminomethyl-2-thiouridine (mnm(5)s(2)U) at tRNA wobble positions. The polypeptide is Protein TusB (Pectobacterium parmentieri).